Consider the following 1071-residue polypeptide: ATP-dependent helicase/deoxyribonuclease subunit B (1071 aa).

Belongs to the helicase family. AddB/RexB type 2 subfamily. Heterodimer of AddA and RexB. The cofactor is Mg(2+).

The heterodimer acts as both an ATP-dependent DNA helicase and an ATP-dependent, dual-direction single-stranded exonuclease. Recognizes the chi site generating a DNA molecule suitable for the initiation of homologous recombination. This subunit has 5' -&gt; 3' nuclease activity but not helicase activity. This Streptococcus pyogenes serotype M12 (strain MGAS2096) protein is ATP-dependent helicase/deoxyribonuclease subunit B.